The following is a 71-amino-acid chain: Ceratotoxin-A (71 aa).

The N-terminal stretch at 1–23 (MANLKAVFLICIVAFIALQCVVA) is a signal peptide. 2 propeptides span residues 24–35 (EPAAEDSVVVKR) and 65–71 (VAAGLVG).

In terms of assembly, homomer of four to six subunits.

It is found in the secreted. In terms of biological role, female-specific peptides with potent activity against Gram-positive and Gram-negative bacteria. They have as well hemolytic activity. This Ceratitis capitata (Mediterranean fruit fly) protein is Ceratotoxin-A (CTXA1).